The sequence spans 595 residues: MAGAIASRMSFSSLKRKQPKTFTVRIVTMDAEMEFNCEMKWKGKDLFDLVCRTLGLRETWFFGLQYTIKDTVAWLKMDKKVLDHDVSKEEPVTFHFLAKFYPENAEEELVQEITQHLFFLQVKKQILDEKIYCPPEASVLLASYAVQAKYGDYDPSVHKRGFLAQEELLPKRVINLYQMTPEMWEERITAWYAEHRGRARDEAEMEYLKIAQDLEMYGVNYFAIRNKKGTELLLGVDALGLHIYDPENRLTPKISFPWNEIRNISYSDKEFTIKPLDKKIDVFKFNSSKLRVNKLILQLCIGNHDLFMRRRKADSLEVQQMKAQAREEKARKQMERQRLAREKQMREEAERTRDELERRLLQMKEEATMANEALMRSEETADLLAEKAQITEEEAKLLAQKAAEAEQEMQRIKATAIRTEEEKRLMEQKVLEAEVLALKMAEESERRAKEADQLKQDLQEAREAERRAKQKLLEIATKPTYPPMNPIPAPLPPDIPSFNLIGDSLSFDFKDTDMKRLSMEIEKEKVEYMEKSKHLQEQLNELKTEIEALKLKERETALDILHNENSDRGGSSKHNTIKKLTLQSAKSRVAFFEEL.

Ser13 carries the phosphoserine modification. Residues 22 to 311 enclose the FERM domain; that stretch reads FTVRIVTMDA…GNHDLFMRRR (290 aa). Phosphoserine; by PAK is present on Ser518.

As to quaternary structure, interacts with NHERF1, HGS and AGAP2. Interacts with LAYN. Interacts with SGSM3. Interacts (via FERM domain) with MPP1. Interacts with WWC1. Interacts with the CUL4A-RBX1-DDB1-VprBP/DCAF1 E3 ubiquitin-protein ligase complex. The unphosphorylated form interacts (via FERM domain) with VPRBP/DCAF1. Interacts (via FERM domain) with NOP53; the interaction is direct. Interacts with SCHIP1; the interaction is direct. Phosphorylation of Ser-518 inhibits nuclear localization by disrupting the intramolecular association of the FERM domain with the C-terminal tail. The dephosphorylation of Ser-518 favors the interaction with NOP53. Post-translationally, ubiquitinated by the CUL4A-RBX1-DDB1-DCAF1/VprBP E3 ubiquitin-protein ligase complex for ubiquitination and subsequent proteasome-dependent degradation. Widely expressed. Isoform 1 and isoform 3 are predominant. Isoform 4, isoform 5 and isoform 6 are expressed moderately. Isoform 8 is found at low frequency. Isoform 7, isoform 9 and isoform 10 are not expressed in adult tissues, with the exception of adult retina expressing isoform 10. Isoform 9 is faintly expressed in fetal brain, heart, lung, skeletal muscle and spleen. Fetal thymus expresses isoforms 1, 7, 9 and 10 at similar levels.

It is found in the cell projection. The protein localises to the filopodium membrane. It localises to the ruffle membrane. The protein resides in the nucleus. Its subcellular location is the cytoplasm. It is found in the perinuclear region. The protein localises to the cytoplasmic granule. It localises to the cytoskeleton. In terms of biological role, probable regulator of the Hippo/SWH (Sav/Wts/Hpo) signaling pathway, a signaling pathway that plays a pivotal role in tumor suppression by restricting proliferation and promoting apoptosis. Along with WWC1 can synergistically induce the phosphorylation of LATS1 and LATS2 and can probably function in the regulation of the Hippo/SWH (Sav/Wts/Hpo) signaling pathway. May act as a membrane stabilizing protein. May inhibit PI3 kinase by binding to AGAP2 and impairing its stimulating activity. Suppresses cell proliferation and tumorigenesis by inhibiting the CUL4A-RBX1-DDB1-VprBP/DCAF1 E3 ubiquitin-protein ligase complex. The protein is Merlin (NF2) of Homo sapiens (Human).